The primary structure comprises 473 residues: 3-isopropylmalate dehydratase large subunit (473 aa).

Residues cysteine 354, cysteine 414, and cysteine 417 each contribute to the [4Fe-4S] cluster site.

It belongs to the aconitase/IPM isomerase family. LeuC type 1 subfamily. In terms of assembly, heterodimer of LeuC and LeuD. [4Fe-4S] cluster serves as cofactor.

It carries out the reaction (2R,3S)-3-isopropylmalate = (2S)-2-isopropylmalate. Its pathway is amino-acid biosynthesis; L-leucine biosynthesis; L-leucine from 3-methyl-2-oxobutanoate: step 2/4. Functionally, catalyzes the isomerization between 2-isopropylmalate and 3-isopropylmalate, via the formation of 2-isopropylmaleate. This chain is 3-isopropylmalate dehydratase large subunit, found in Mycobacterium tuberculosis (strain CDC 1551 / Oshkosh).